An 86-amino-acid polypeptide reads, in one-letter code: U22-theraphotoxin-Cg1a (86 aa).

Residues 1-20 (MKVSVVLAITVLALLSVAYA) form the signal peptide. Positions 21–51 (SEFEEKELVKEVVRTIFLGKEDAALREETDR) are excised as a propeptide. 3 disulfide bridges follow: Cys53/Cys67, Cys60/Cys72, and Cys66/Cys79. Phe85 is modified (phenylalanine amide).

This sequence belongs to the neurotoxin 10 (Hwtx-1) family. 42 (Jztx-44) subfamily. As to expression, expressed by the venom gland.

It is found in the secreted. Its function is as follows. Probable ion channel inhibitor. This is U22-theraphotoxin-Cg1a from Chilobrachys guangxiensis (Chinese earth tiger tarantula).